The primary structure comprises 261 residues: Na(+)-translocating NADH-quinone reductase subunit C (261 aa).

A helical transmembrane segment spans residues 12 to 32 (LGVVIGLSLVCSIIVSTAAVG). Thr229 carries the FMN phosphoryl threonine modification.

This sequence belongs to the NqrC family. In terms of assembly, composed of six subunits; NqrA, NqrB, NqrC, NqrD, NqrE and NqrF. FMN serves as cofactor.

It is found in the cell inner membrane. It carries out the reaction a ubiquinone + n Na(+)(in) + NADH + H(+) = a ubiquinol + n Na(+)(out) + NAD(+). Functionally, NQR complex catalyzes the reduction of ubiquinone-1 to ubiquinol by two successive reactions, coupled with the transport of Na(+) ions from the cytoplasm to the periplasm. NqrA to NqrE are probably involved in the second step, the conversion of ubisemiquinone to ubiquinol. The protein is Na(+)-translocating NADH-quinone reductase subunit C of Vibrio parahaemolyticus serotype O3:K6 (strain RIMD 2210633).